The following is a 1100-amino-acid chain: MALLGIKLMTLVFAAWLSCCHSSSALPSSGLSGPCLNHSCLLRNSLNGASQWGTILHSPAVGSNCPPCPMMSIMGCSPPKPLQSNSYGVLCSTIASKAKQDLKLCWKEVQTRSEMYSKRISAALIDSLHQAVGMLLMIIIWIWSSIFLVVYHVLAYMTTYHLSSAVCVGFLIFCTICAFRLISWICGDLLAFNVSGLTPIWVNFSESSCPAGLSLRRYKNEKTVEGYKPFIIPQKSPKKSVIELSFSNGSHLGYATCVRLWDGSICLMTAKHCLVKEALLKGRVAGHSLPVKNFDLFLTCDEIDFSLLRGPKQWEAYLGVKGADLITSNRIGRSPVTFYNLSKDGEWLANSAQITGRHGKLCSVLSNTSPGDSGTPYYSGKNVVGIHKGTSELENYNLMIPIPNIPGLTSPDFKFETTNVRGNLYNDEGFRLSVGEDDKAEHWTDRLMKSITFKTKRWADWAEEESESDDERGKVVPPAKPSNYGEGCPPEHNQYLSDVGDLLTKVIGPEQNEKCVDILMGIMGVDKNEVAPHKEEKAEKGKRSSGFGHGKNRKGTNHPMRRGYNFRNCKKGGGQDESESHREISGRDPGRESNDKSPQGEAEEFERYFSSFYSWKLHNSGEANSGFRPCGKIPKFYRPRKRRVSEWGQNLARKHSSLGEITQGFGWPEAGAEAELRSLRLQAQRWLERSKSSVIPSAIEREIVISRLVESYKICRSEAPLCSSGSDLSWKGFLEDFREAVSSLELDAGIGVPYIGYGYPTHRGWVENPRLLPVLSRLVYARLQRLATLSVDGKTPEELVRDGLVDPVRVFVKGEPHKQSKLDEGRYRLIMSVSLIDQLVARVLFQKQNKLELLLWRSIPSKPGFGLSTVEQVEEFIDHLARVVDVKSDDLLENWRELMVPTDCSGFDWSVSDWMLKDEMEVRNRLTINCNDLTRRLRNSWLYCLSNSDLALSDGSLLAQEVPGVQKSGSYNTSSTNSRIRVMAAYFAGASWAVAIGDDALESIDTTLAVYKSLGFKVEVSEDLEFCSHIFKTRSLAIPVNTSKMLYRLIYGYEPECGNLDVLRNYLCALASVLHELRHDQDLVQNLSKWLIPDGSQKIS.

Residues 1–25 form the signal peptide; that stretch reads MALLGIKLMTLVFAAWLSCCHSSSA. 2 consecutive transmembrane segments (helical) span residues 131 to 151 and 165 to 185; these read AVGM…LVVY and AVCV…ISWI. A Peptidase S39 domain is found at 224–416; sequence VEGYKPFIIP…GLTSPDFKFE (193 aa). Residues His272, Asp304, and Ser373 each act as for protease activity in the active site. 2 disordered regions span residues 463–493 and 530–601; these read EEES…PEHN and VAPH…PQGE. A compositionally biased stretch (basic and acidic residues) spans 530 to 542; the sequence is VAPHKEEKAEKGK. The span at 550–561 shows a compositional bias: basic residues; that stretch reads GKNRKGTNHPMR. The segment covering 578 to 595 has biased composition (basic and acidic residues); the sequence is SESHREISGRDPGRESND. The RdRp catalytic domain maps to 897-1012; it reads ELMVPTDCSG…SIDTTLAVYK (116 aa).

It belongs to the ssRNA positive-strand viruses RNA-directed RNA polymerase family.

Its subcellular location is the host membrane. It carries out the reaction RNA(n) + a ribonucleoside 5'-triphosphate = RNA(n+1) + diphosphate. Its function is as follows. Precursor from which the RNA-dependent RNA polymerase (RdRp) is probably released. RNA-dependent RNA polymerase plays an essential role in virus replication (Potential). Functionally, RNA-dependent RNA polymerase replicates the viral genome. This Poinsettia latent virus (isolate Euphorbia pulcherrima/Germany/Siepen/2005) (PnLV) protein is Protein P2-P3.